A 551-amino-acid chain; its full sequence is Cytosolic Fe-S cluster assembly factor NAR1 (551 aa).

Cysteine 20, cysteine 57, cysteine 60, cysteine 63, cysteine 178, and cysteine 242 together coordinate [4Fe-4S] cluster. The tract at residues 395–435 (DPSGHKKRSVRRVAALRSRGRKDSSSEDSTGTPSAISNALG) is disordered. The span at 421 to 431 (EDSTGTPSAIS) shows a compositional bias: polar residues. Position 451 (cysteine 451) interacts with [4Fe-4S] cluster.

The protein belongs to the NARF family.

In terms of biological role, component of the cytosolic Fe/S protein assembly machinery. Required for maturation of extramitochondrial Fe/S proteins. May play a role in the transfer of pre-assembled Fe/S clusters to target apoproteins. This Candida glabrata (strain ATCC 2001 / BCRC 20586 / JCM 3761 / NBRC 0622 / NRRL Y-65 / CBS 138) (Yeast) protein is Cytosolic Fe-S cluster assembly factor NAR1 (NAR1).